An 881-amino-acid polypeptide reads, in one-letter code: DNA mismatch repair protein MutS (881 aa).

Glycine 632–serine 639 is an ATP binding site.

This sequence belongs to the DNA mismatch repair MutS family.

Its function is as follows. This protein is involved in the repair of mismatches in DNA. It is possible that it carries out the mismatch recognition step. This protein has a weak ATPase activity. This Acinetobacter baylyi (strain ATCC 33305 / BD413 / ADP1) protein is DNA mismatch repair protein MutS.